Consider the following 438-residue polypeptide: Glutamate-1-semialdehyde 2,1-aminomutase (438 aa).

Position 277 is an N6-(pyridoxal phosphate)lysine (Lys-277).

This sequence belongs to the class-III pyridoxal-phosphate-dependent aminotransferase family. HemL subfamily. In terms of assembly, homodimer. It depends on pyridoxal 5'-phosphate as a cofactor.

The protein localises to the cytoplasm. It carries out the reaction (S)-4-amino-5-oxopentanoate = 5-aminolevulinate. It functions in the pathway porphyrin-containing compound metabolism; protoporphyrin-IX biosynthesis; 5-aminolevulinate from L-glutamyl-tRNA(Glu): step 2/2. The protein operates within porphyrin-containing compound metabolism; chlorophyll biosynthesis. This Synechococcus sp. (strain CC9311) protein is Glutamate-1-semialdehyde 2,1-aminomutase.